Reading from the N-terminus, the 181-residue chain is MAKLSDIYQEQVIDKLINQFSYKSRMQVPNIEKIILNMGVGQTVTDKKLLDNAVANLTAISGQKPIITKARKSIASFKIRHGYPIGCKVTLRGKRMWEFFDKLISIVIPRIRDFRGFSIKSFDGRGNYSIGVVEQIIFPEIDYDKIDRVRGMNITITTTANSNNEGYALLSALNFPFRKNK.

The protein belongs to the universal ribosomal protein uL5 family. In terms of assembly, part of the 50S ribosomal subunit; part of the 5S rRNA/L5/L18/L25 subcomplex. Contacts the 5S rRNA and the P site tRNA. Forms a bridge to the 30S subunit in the 70S ribosome.

Functionally, this is one of the proteins that bind and probably mediate the attachment of the 5S RNA into the large ribosomal subunit, where it forms part of the central protuberance. In the 70S ribosome it contacts protein S13 of the 30S subunit (bridge B1b), connecting the 2 subunits; this bridge is implicated in subunit movement. Contacts the P site tRNA; the 5S rRNA and some of its associated proteins might help stabilize positioning of ribosome-bound tRNAs. This chain is Large ribosomal subunit protein uL5, found in Baumannia cicadellinicola subsp. Homalodisca coagulata.